Here is a 253-residue protein sequence, read N- to C-terminus: Imidazole glycerol phosphate synthase subunit HisF (253 aa).

Residues Asp-11 and Asp-130 contribute to the active site.

This sequence belongs to the HisA/HisF family. In terms of assembly, heterodimer of HisH and HisF.

Its subcellular location is the cytoplasm. The catalysed reaction is 5-[(5-phospho-1-deoxy-D-ribulos-1-ylimino)methylamino]-1-(5-phospho-beta-D-ribosyl)imidazole-4-carboxamide + L-glutamine = D-erythro-1-(imidazol-4-yl)glycerol 3-phosphate + 5-amino-1-(5-phospho-beta-D-ribosyl)imidazole-4-carboxamide + L-glutamate + H(+). It participates in amino-acid biosynthesis; L-histidine biosynthesis; L-histidine from 5-phospho-alpha-D-ribose 1-diphosphate: step 5/9. Functionally, IGPS catalyzes the conversion of PRFAR and glutamine to IGP, AICAR and glutamate. The HisF subunit catalyzes the cyclization activity that produces IGP and AICAR from PRFAR using the ammonia provided by the HisH subunit. This is Imidazole glycerol phosphate synthase subunit HisF from Methylibium petroleiphilum (strain ATCC BAA-1232 / LMG 22953 / PM1).